A 348-amino-acid polypeptide reads, in one-letter code: MVKRLSHLLVPLIAIILGLAAGALIMLVSGYSVASGYSALWNGIFGEIYYVGETIRQITPYILSGLAVAFAFRTGLFNIGVEGQLLVGWTAAVWVGTAFDGPAYIHLPLALITAAAAGGLWGFIPGILKARFYVHEVIVTIMMNYIALHMTNYIISNVLTDHQDKTGKIHESASLRSPFLEQITDYSRLHLGIIVALLAAVIMWFIINKSTKGFELRAVGFNQHASQYAGMSVRKNIMTSMLISGAFAGLAGAMEGLGTFEYAAVKGAFTGVGFDGIAVALLGGNTAVGVVLAACLLGGLKIGALNMPIESGVPSEVVDIVIAIIILFVASSYAIRFVMGKLKKKGAN.

9 helical membrane passes run 8 to 28 (LLVP…IMLV), 61 to 81 (YILS…NIGV), 85 to 105 (LLVG…PAYI), 107 to 127 (LPLA…IPGI), 136 to 156 (EVIV…YIIS), 189 to 209 (LHLG…IINK), 237 to 257 (IMTS…MEGL), 277 to 297 (IAVA…ACLL), and 320 to 340 (IVIA…FVMG).

It belongs to the binding-protein-dependent transport system permease family. The complex is composed of two ATP-binding proteins (NupO), two transmembrane proteins (NupP and NupQ) and a solute-binding protein (NupN).

It is found in the cell membrane. In terms of biological role, part of an ABC transporter complex involved in the uptake of guanosine. Responsible for the translocation of the substrate across the membrane. May be a nucleoside transporter of broad specificity but with various affinities for different substrates. The polypeptide is Guanosine ABC transporter permease protein NupP (Bacillus subtilis (strain 168)).